We begin with the raw amino-acid sequence, 174 residues long: Disulfide bond formation protein B (174 aa).

At 1-14 (MLNFLNICSKTRKS) the chain is on the cytoplasmic side. Residues 15–31 (WVLLIFTVVILELIALY) traverse the membrane as a helical segment. The Periplasmic segment spans residues 32 to 49 (LQHIVLIKPCVLCVYQRC). Cysteine 41 and cysteine 44 are oxidised to a cystine. A helical membrane pass occupies residues 50–65 (ALCGIGIAGLIGTIAP). The Cytoplasmic segment spans residues 66 to 71 (FTPLRF). A helical membrane pass occupies residues 72-89 (FSIPIWIYSAWKGLLLAK). Topologically, residues 90–144 (EYTDIQLHPSPFFMCDLFVQFPHWLPLNKWWPSMFDADGDCAEYKWYFLSLEISQ) are periplasmic. Cysteine 104 and cysteine 130 are joined by a disulfide. A helical membrane pass occupies residues 145-163 (WMLIIFANYLIIAILVSLS). Over 164–174 (QIIDLKKWNNK) the chain is Cytoplasmic.

This sequence belongs to the DsbB family.

The protein resides in the cell inner membrane. In terms of biological role, required for disulfide bond formation in some periplasmic proteins. Acts by oxidizing the DsbA protein. The sequence is that of Disulfide bond formation protein B from Blochmanniella pennsylvanica (strain BPEN).